A 318-amino-acid chain; its full sequence is MARHKIVLIGSGYVGSAFAHAIVAKGLVDEMAIIDIDEDKAKADVWDLNHATPFGDNFVNVHVGQYEDFKDADIVVICASAKLAKGETRLKLLEDNVDIFVPMIQRIVDSGFDGYFVLPSNPVDIMSYVVKRVSNFPKNKIIGSGTSLDTARFQFFLSREFDVAPNQVYAPIIGEHGDSQVAVWSHAQIAGEPVLDLLPSNTNLEAFKTSISNRTTQIGYDIYVRKGTTNFGISLSLVRIVEAILFNKNIIMNVSSYVEGEYGLSDVYIGVPTVINRNGADRIIELALSKEELSQLHHSADIILDYQRQADAIIDQMC.

Residues Val14, Asp35, Lys40, and Tyr66 each contribute to the NAD(+) site. Residues Arg89 and 121–124 (NPVD) contribute to the substrate site. Residue Ser144 coordinates NAD(+). 149 to 152 (DTAR) contacts substrate. His176 (proton acceptor) is an active-site residue. Tyr220 is subject to Phosphotyrosine. Residue Thr229 coordinates substrate.

It belongs to the LDH/MDH superfamily. LDH family. In terms of assembly, homotetramer.

The protein localises to the cytoplasm. The enzyme catalyses (S)-lactate + NAD(+) = pyruvate + NADH + H(+). The protein operates within fermentation; pyruvate fermentation to lactate; (S)-lactate from pyruvate: step 1/1. Catalyzes the conversion of lactate to pyruvate. The polypeptide is L-lactate dehydrogenase (Staphylococcus haemolyticus (strain JCSC1435)).